Here is a 306-residue protein sequence, read N- to C-terminus: Natural cytotoxicity triggering receptor 1 (306 aa).

The signal sequence occupies residues Met-1 to Ala-21. Topologically, residues Pro-22–Arg-257 are extracellular. Ig-like domains lie at Glu-42–Tyr-100 and Gly-137–Gly-192. 2 disulfide bridges follow: Cys-49/Cys-98 and Cys-144/Cys-190. Residue Asn-216 is glycosylated (N-linked (GlcNAc...) asparagine). Residues Met-258–Ser-278 traverse the membrane as a helical segment. Residues Arg-279–Glu-306 are Cytoplasmic-facing.

The protein belongs to the natural cytotoxicity receptor (NCR) family. Interacts with CD3Z and FCER1G. In terms of tissue distribution, expressed in NK cells.

Its subcellular location is the cell membrane. Cytotoxicity-activating receptor that may contribute to the increased efficiency of activated natural killer (NK) cells to mediate tumor cell lysis. In Macaca fascicularis (Crab-eating macaque), this protein is Natural cytotoxicity triggering receptor 1 (NCR1).